The primary structure comprises 75 residues: Kappa-thalatoxin-Tas2a (75 aa).

Residues 1 to 22 form the signal peptide; sequence MKFQMIAAVLLIAFCLSVVVTA. Positions 23-40 are excised as a propeptide; sequence RMELQDDEEMKNGSFQKR. One can recognise a ShKT domain in the interval 43–75; that stretch reads CIDTIPKSRCTAFQCKHSMKYRLSFCRKTCGTC. Cystine bridges form between cysteine 43/cysteine 75, cysteine 52/cysteine 68, and cysteine 57/cysteine 72.

Belongs to the sea anemone type 1 potassium channel toxin family. Type 1a subfamily.

The protein resides in the secreted. It is found in the nematocyst. In terms of biological role, inhibits voltage-gated potassium channels (Kv) with higher potency for Kv1.1/KCNA1 and Kv1.3/KCNA3 (IC(50)=3.4 nM). The polypeptide is Kappa-thalatoxin-Tas2a (Thalassianthus aster (Fuzzy-tipped anemone)).